The following is a 472-amino-acid chain: Ulvan lyase (472 aa).

A signal peptide spans 1–21 (MIIKQYLLKISLCVLLLGCDS). Substrate-binding residues include N46 and N109. Residue H110 is the Proton donor of the active site. K112 and H130 together coordinate substrate. Y175 functions as the Proton acceptor in the catalytic mechanism. 3 residues coordinate substrate: R191, H195, and Y233. H195 is a binding site for Zn(2+). Zn(2+)-binding residues include H251, C253, and H265. H265 is a substrate binding site.

This sequence belongs to the polysaccharide lyase 25 family.

Functionally, ulvan lyase involved in ulvan degradation. Ulvan is the main polysaccharide component of the Ulvales (green seaweed) cell wall. It is composed of disaccharide building blocks comprising 3-sulfated rhamnose (Rha3S) linked to D-glucuronic acid (GlcA), L-iduronic acid (IduA), or D-xylose (Xyl). Ulvan lyase catalyzes the endolytic cleavage of the glycosidic bond between Rha3S and the uronic acids GlcA or IduA, producing oligosaccharides that have unsaturated 4-deoxy-L-threo-hex-4-enopyranosiduronic acid (deltaUA) at the non-reducing end. This results eventually in the degradation of the ulvan polysaccharide into deltaUA-Rha3S disaccharides and deltaUA-Rha3S-Xyl-Rha3S tetrasaccharides. This chain is Ulvan lyase, found in Nonlabens ulvanivorans (Persicivirga ulvanivorans).